Here is a 1149-residue protein sequence, read N- to C-terminus: Transforming acidic coiled-coil-containing protein 2 (1149 aa).

3 disordered regions span residues 1–73, 91–227, and 247–430; these read MGNE…GSNQ, SASP…ASSG, and PCSA…VPLT. Polar residues predominate over residues 13–35; sequence TSSVQSPRSLQPPGKSQSLQKQQ. Residues 91–106 are compositionally biased toward low complexity; sequence SASPSAARASPAPLAP. The residue at position 100 (Ser100) is a Phosphoserine. Residues 155–180 show a composition bias toward pro residues; that stretch reads KAPPAPPPPPPEVTPEPEVIDPPAPE. Ser265 is subject to Phosphoserine. 2 stretches are compositionally biased toward polar residues: residues 267–284 and 300–317; these read ESVP…SLQA and TLTT…SSTL. Positions 318–334 are enriched in basic residues; that stretch reads KRTKKTRPPSLKKKQAT. Ser354 is subject to Phosphoserine. A compositionally biased stretch (basic and acidic residues) spans 358-368; sequence SEEHLAPETKT. Ser419 is modified (phosphoserine). The residue at position 439 (Thr439) is a Phosphothreonine. The interval 463–617 is disordered; that stretch reads SEDKGSWESQ…PAKKKKTPLK (155 aa). Residues 481-498 show a composition bias toward basic residues; it reads KIGKKPVAKMPLRRPKMK. The 89-residue stretch at 508–596 folds into the SPAZ domain; it reads PASPPRSPTE…SPASFEIPAS (89 aa). 2 positions are modified to phosphoserine: Ser510 and Ser514. Thr516 is subject to Phosphothreonine. The span at 541–561 shows a compositional bias: polar residues; the sequence is NPFSSTSKMQESPKLSQQSYN. 5 positions are modified to phosphoserine: Ser552, Ser582, Ser585, Ser587, and Ser596. Positions 575 to 590 are enriched in low complexity; it reads KASSKTPSSPSKSPAS. A phosphothreonine mark is found at Thr632, Thr653, and Thr657. Disordered regions lie at residues 636-665 and 696-719; these read KKSP…SAIS and DFPQ…SEEL. Residues 652–665 are compositionally biased toward low complexity; it reads PTPAATPEAPSAIS. Polar residues predominate over residues 701-716; sequence SDLSNFVNETKFNSPS. 2 positions are modified to phosphoserine: Ser714 and Ser736. Position 755 is a phosphothreonine (Thr755). The segment at 756–780 is disordered; it reads PQESPVKSPPVRMSDSPTPCSGSSF. Residues Ser759 and Ser771 each carry the phosphoserine modification. Over residues 770-780 the composition is skewed to polar residues; it reads DSPTPCSGSSF. Coiled-coil stretches lie at residues 877 to 905 and 948 to 1148; these read AQKL…LASR and DLDS…KMGK.

This sequence belongs to the TACC family. In terms of assembly, interacts with microtubules. Interacts with YEATS4, GCN5L2 and PCAF. Interacts with CCDC100/CEP120. In terms of processing, phosphorylated; which is required for localization in centrosome. As to expression, expressed in brain, kidney, lung, thymus and ovary. Not detectable in normal tissues at protein level.

The protein localises to the cytoplasm. It is found in the nucleus. It localises to the cytoskeleton. The protein resides in the microtubule organizing center. Its subcellular location is the centrosome. In terms of biological role, plays a role in the microtubule-dependent coupling of the nucleus and the centrosome. Involved in the processes that regulate centrosome-mediated interkinetic nuclear migration (INM) of neural progenitors. May play a role in organizing centrosomal microtubules. The sequence is that of Transforming acidic coiled-coil-containing protein 2 (Tacc2) from Mus musculus (Mouse).